The primary structure comprises 442 residues: GDP-L-galactose phosphorylase 1 (442 aa).

Catalysis depends on His-238, which acts as the Tele-GMP-histidine intermediate.

It belongs to the GDPGP1 family. As to quaternary structure, interacts with TLP1. In terms of tissue distribution, expressed in leaves, stems, roots, flowers and siliques. Highest expression in green tissues.

The protein resides in the cytoplasm. It localises to the nucleus. The enzyme catalyses GDP-beta-L-galactose + phosphate = beta-L-galactose 1-phosphate + GDP + H(+). It participates in cofactor biosynthesis; L-ascorbate biosynthesis via GDP-alpha-D-mannose pathway; L-ascorbate from GDP-alpha-D-mannose: step 2/5. Its activity is regulated as follows. Not inhibited by dithiothreitol, N-ethylmaleimide, phenylmethane sulfonyl fluoride, ascorbate, L-galactose and L-galactonolactone. Functionally, catalyzes a reaction of the Smirnoff-Wheeler pathway, the major route to ascorbate biosynthesis in plants. Acts as a phosphorylase rather than as a transferase. Uses preferentially GDP-L-galactose and GDP-D-glucose as substrates. Lower activity with GDP-L-fucose, very low activity with GDP-D-mannose, and no activity with UDP-D-glucose, UDP-D-galactose or ADP-D-glucose. Highly specific for inorganic phosphate as the guanylyl acceptor. This is GDP-L-galactose phosphorylase 1 (VTC2) from Arabidopsis thaliana (Mouse-ear cress).